Reading from the N-terminus, the 158-residue chain is Glutathione peroxidase homolog BsaA (158 aa).

The active site involves C36.

This sequence belongs to the glutathione peroxidase family.

This is Glutathione peroxidase homolog BsaA (bsaA) from Staphylococcus aureus (strain COL).